Consider the following 132-residue polypeptide: Large-conductance mechanosensitive channel (132 aa).

2 consecutive transmembrane segments (helical) span residues 14-34 (VIDLAVGVVIGAAFGKIVSSL) and 67-87 (GNFIQTIFDFLIIAAAIFMFV).

Belongs to the MscL family. In terms of assembly, homopentamer.

It localises to the cell membrane. Functionally, channel that opens in response to stretch forces in the membrane lipid bilayer. May participate in the regulation of osmotic pressure changes within the cell. This is Large-conductance mechanosensitive channel from Bacillus cereus (strain AH820).